The sequence spans 434 residues: MEASVAPPALRNAPCAGVNAACLSAADDAVAIAIAQETTRQRESIELIASENFVSKAVLEAQGSVLTNKYAEGYPQRRYYGGCANVDRVEDLAIARLNQLFGSTYANVQPHSGSQANQAVFLALLAPGDTILGLDLKAGGHLTHGAPVNISGRWFTAVSYGVDPRTHLIDMEQMADLARRHRPKLLIAGGSAYPRLLDFARFRQIADEVGAILMVDMAHFAGLVAGGVYPSPVPFADVITSTTHKTLRGPRGGFVLTNDAAIAKKINSAVFPGLQGGPLMHIIAAKAVAFGEALDPSFKIYARRVVENCRVLAQTLLDGGLAITSGGTDCHLAVVDLRPLGVTGTIAEQALESIGITLNKNAIPNDPEKPMVTSGIRVGSAAGTSRGFGPEEYRRIAALILETLHAVRAGTLEADREGIRTRVRSLVAGFPLPY.

(6S)-5,6,7,8-tetrahydrofolate contacts are provided by residues L136 and G140–L142. At K245 the chain carries N6-(pyridoxal phosphate)lysine.

Belongs to the SHMT family. In terms of assembly, homodimer. It depends on pyridoxal 5'-phosphate as a cofactor.

Its subcellular location is the cytoplasm. The enzyme catalyses (6R)-5,10-methylene-5,6,7,8-tetrahydrofolate + glycine + H2O = (6S)-5,6,7,8-tetrahydrofolate + L-serine. It participates in one-carbon metabolism; tetrahydrofolate interconversion. The protein operates within amino-acid biosynthesis; glycine biosynthesis; glycine from L-serine: step 1/1. Its function is as follows. Catalyzes the reversible interconversion of serine and glycine with tetrahydrofolate (THF) serving as the one-carbon carrier. This reaction serves as the major source of one-carbon groups required for the biosynthesis of purines, thymidylate, methionine, and other important biomolecules. Also exhibits THF-independent aldolase activity toward beta-hydroxyamino acids, producing glycine and aldehydes, via a retro-aldol mechanism. The polypeptide is Serine hydroxymethyltransferase 1 (Rhodospirillum rubrum (strain ATCC 11170 / ATH 1.1.1 / DSM 467 / LMG 4362 / NCIMB 8255 / S1)).